The chain runs to 419 residues: Creatine kinase S-type, mitochondrial (419 aa).

Residues 1–39 constitute a mitochondrion transit peptide; the sequence is MASTFSKLLTGRNASLLFATLGTGALTTGYLLNKQNVCA. Residues 40–64 are cardiolipin-binding; sequence AAREQHKLFPPSADYPDLRKHNNCM. Residues 46 to 132 enclose the Phosphagen kinase N-terminal domain; it reads KLFPPSADYP…FDPVIKLRHN (87 aa). The Phosphagen kinase C-terminal domain occupies 159 to 401; it reads YVLSSRVRTG…NYLVDCEKKL (243 aa). Residues 162–166 and histidine 225 each bind ATP; that span reads SSRVR. Phosphotyrosine is present on tyrosine 255. Residues arginine 270, arginine 326, 354-359, and aspartate 369 each bind ATP; that span reads RGTGGV. Phosphothreonine is present on threonine 356.

The protein belongs to the ATP:guanido phosphotransferase family. In terms of assembly, exists as an octamer composed of four CKMT2 homodimers.

It is found in the mitochondrion inner membrane. The catalysed reaction is creatine + ATP = N-phosphocreatine + ADP + H(+). Functionally, reversibly catalyzes the transfer of phosphate between ATP and various phosphogens (e.g. creatine phosphate). Creatine kinase isoenzymes play a central role in energy transduction in tissues with large, fluctuating energy demands, such as skeletal muscle, heart, brain and spermatozoa. This is Creatine kinase S-type, mitochondrial (CKMT2) from Bos taurus (Bovine).